A 173-amino-acid polypeptide reads, in one-letter code: 6,7-dimethyl-8-ribityllumazine synthase (173 aa).

Residues Tyr34, 65–67 (ALE), and 94–96 (CVI) each bind 5-amino-6-(D-ribitylamino)uracil. Residue 99–100 (ET) participates in (2S)-2-hydroxy-3-oxobutyl phosphate binding. Residue His102 is the Proton donor of the active site. Asn127 is a 5-amino-6-(D-ribitylamino)uracil binding site. Arg141 is a binding site for (2S)-2-hydroxy-3-oxobutyl phosphate.

Belongs to the DMRL synthase family.

The enzyme catalyses (2S)-2-hydroxy-3-oxobutyl phosphate + 5-amino-6-(D-ribitylamino)uracil = 6,7-dimethyl-8-(1-D-ribityl)lumazine + phosphate + 2 H2O + H(+). The protein operates within cofactor biosynthesis; riboflavin biosynthesis; riboflavin from 2-hydroxy-3-oxobutyl phosphate and 5-amino-6-(D-ribitylamino)uracil: step 1/2. Catalyzes the formation of 6,7-dimethyl-8-ribityllumazine by condensation of 5-amino-6-(D-ribitylamino)uracil with 3,4-dihydroxy-2-butanone 4-phosphate. This is the penultimate step in the biosynthesis of riboflavin. This chain is 6,7-dimethyl-8-ribityllumazine synthase, found in Methylorubrum extorquens (strain CM4 / NCIMB 13688) (Methylobacterium extorquens).